The sequence spans 743 residues: Conserved oligomeric Golgi complex subunit 8 (743 aa).

Disordered regions lie at residues 549–672 and 704–743; these read EDGP…TEPE and TQDD…KKDD. Composition is skewed to basic and acidic residues over residues 563 to 581, 594 to 621, 633 to 647, and 654 to 664; these read ESVK…HGTD, PVKE…HETP, SEAK…HLEL, and QEIREQEHKEV. Acidic residues predominate over residues 704–726; that stretch reads TQDDPIEEEEGWGWGDDDGEEQE. Positions 727-743 are enriched in basic and acidic residues; the sequence is ISSKEVESPKEKCKKDD.

The protein belongs to the COG8 family. Component of the conserved oligomeric Golgi complex which is composed of eight different subunits and is required for normal Golgi morphology and localization.

It is found in the golgi apparatus membrane. In terms of biological role, required for normal Golgi function. The sequence is that of Conserved oligomeric Golgi complex subunit 8 (cogc-8) from Caenorhabditis elegans.